The sequence spans 186 residues: Protein C (186 aa).

Residues 1–15 (MSKTDWNASGLSRPS) show a composition bias toward polar residues. Positions 1-44 (MSKTDWNASGLSRPSPSAHWPSRKLWQHGQKYQTTQDRSEPPAG) are disordered.

The protein belongs to the morbillivirus protein C family. In terms of assembly, interacts with the phosphoprotein (via C-terminus); this interaction allows C to associate with the ribonucleocapsid.

It localises to the host nucleus. The protein localises to the host cytoplasmic vesicle. In terms of biological role, ribonucleocapsid-associated protein that interacts with the phosphoprotein (P), thereby increasing replication accuracy and processivity of the polymerase complex. The protein is Protein C (P/V/C) of Homo sapiens (Human).